The sequence spans 296 residues: Aldo-keto reductase MYCFIDRAFT_156381 (296 aa).

NADP(+) is bound at residue D14. The Proton donor role is filled by Y19. H83 serves as a coordination point for substrate. Residues C113–N114, Q139, S168–R178, and R191 contribute to the NADP(+) site. Residue Y201 coordinates substrate. Residue S255–N263 coordinates NADP(+).

It belongs to the aldo/keto reductase family. Aldo/keto reductase 2 subfamily.

It functions in the pathway secondary metabolite biosynthesis. Its function is as follows. Aldo-keto reductase; part of the gene cluster that mediates the biosynthesis of an emodin derivative that may be involved in black Sigatoka disease of banana. The pathway begins with the synthesis of atrochrysone thioester by the polyketide synthase PKS8-1. The atrochrysone carboxyl ACP thioesterase MYCFIDRAFT_190111 then breaks the thioester bond and releases the atrochrysone carboxylic acid from PKS8-1. The decarboxylase MYCFIDRAFT_34057 then catalyzes the concerted decarboxylation-elimination required to convert atochrysone carboxylic acid into emodin anthrone, which is further oxidized to emodin by the anthrone oxygenase MYCFIDRAFT_34418. The functions of the other tailoring enzymes as well as the final product of the cluster have still to be identified. The protein is Aldo-keto reductase MYCFIDRAFT_156381 of Pseudocercospora fijiensis (strain CIRAD86) (Black leaf streak disease fungus).